We begin with the raw amino-acid sequence, 79 residues long: D-alanyl carrier protein (79 aa).

The 77-residue stretch at 1–77 folds into the Carrier domain; it reads MDIKSEVLKI…KIIEGITELR (77 aa). Serine 35 carries the post-translational modification O-(pantetheine 4'-phosphoryl)serine.

The protein belongs to the DltC family. Post-translationally, 4'-phosphopantetheine is transferred from CoA to a specific serine of apo-DCP.

It localises to the cytoplasm. The protein operates within cell wall biogenesis; lipoteichoic acid biosynthesis. Its function is as follows. Carrier protein involved in the D-alanylation of lipoteichoic acid (LTA). The loading of thioester-linked D-alanine onto DltC is catalyzed by D-alanine--D-alanyl carrier protein ligase DltA. The DltC-carried D-alanyl group is further transferred to cell membrane phosphatidylglycerol (PG) by forming an ester bond, probably catalyzed by DltD. D-alanylation of LTA plays an important role in modulating the properties of the cell wall in Gram-positive bacteria, influencing the net charge of the cell wall. In Streptococcus mutans serotype c (strain ATCC 700610 / UA159), this protein is D-alanyl carrier protein.